The sequence spans 222 residues: uncharacterized protein (222 aa).

The HTH gntR-type domain maps to 8–77; that stretch reads AKKNQIIYRY…NTPGYFVCKD (70 aa).

This is an uncharacterized protein from Mycoplasma genitalium (strain ATCC 33530 / DSM 19775 / NCTC 10195 / G37) (Mycoplasmoides genitalium).